The chain runs to 413 residues: Multidrug resistance protein MdtA (413 aa).

An N-terminal signal peptide occupies residues Met1 to Ala20. Disordered stretches follow at residues Ser31–Pro57 and Glu391–Ala413. Residues Pro32–Gly49 are compositionally biased toward low complexity. Residues Ala397–Ala413 are compositionally biased toward basic and acidic residues.

The protein belongs to the membrane fusion protein (MFP) (TC 8.A.1) family. Part of a tripartite efflux system composed of MdtA, MdtB and MdtC.

It is found in the cell inner membrane. This is Multidrug resistance protein MdtA from Salmonella typhi.